The following is a 432-amino-acid chain: Putative transferase At1g60990, chloroplastic (432 aa).

The N-terminal 57 residues, 1–57, are a transit peptide targeting the chloroplast; that stretch reads MNLLQSCKDMAMMMRIDSVSHITNTALLPCLYNGTVLRRRSLSLRKCGFRERKFQLR.

This sequence belongs to the GcvT family. As to expression, expressed in young leaves (at protein level).

It is found in the plastid. The protein localises to the chloroplast. In terms of biological role, folate-dependent protein involved in Fe/S cluster biogenesis. Functionally complements an E.coli mutant defective in ygfZ. In Arabidopsis thaliana (Mouse-ear cress), this protein is Putative transferase At1g60990, chloroplastic.